Consider the following 603-residue polypeptide: Methylenetetrahydrofolate reductase 1 (603 aa).

Glu21 serves as the catalytic Proton donor/acceptor. NAD(+) contacts are provided by residues 21-26 (EFFPPK) and 53-54 (TW). FAD is bound by residues 53–54 (TW), His82, 112–114 (RGD), 130–131 (YA), Tyr153, and Lys173. Residue Asp114 participates in substrate binding. The substrate site is built by Gln184 and Tyr276. Residue Ser355 is modified to Phosphoserine.

It belongs to the methylenetetrahydrofolate reductase family. The cofactor is FAD.

It carries out the reaction (6S)-5-methyl-5,6,7,8-tetrahydrofolate + NADP(+) = (6R)-5,10-methylene-5,6,7,8-tetrahydrofolate + NADPH + H(+). The catalysed reaction is (6S)-5-methyl-5,6,7,8-tetrahydrofolate + NAD(+) = (6R)-5,10-methylene-5,6,7,8-tetrahydrofolate + NADH + H(+). It functions in the pathway one-carbon metabolism; tetrahydrofolate interconversion. Major methylenetetrahydrofolate reductase required to generate the methyl groups necessary for methionine synthetase to convert homocysteine to methionine. Performs 80 to 85 percent of the total methylenetetrahydrofolate reductase activity of the cells. The sequence is that of Methylenetetrahydrofolate reductase 1 (met9) from Schizosaccharomyces pombe (strain 972 / ATCC 24843) (Fission yeast).